The following is a 1190-amino-acid chain: Isoleucine--tRNA ligase, cytoplasmic (1190 aa).

Residues 49-59 (PFATGLPHYGH) carry the 'HIGH' region motif. Positions 271–299 (DKPKAKLSNGPAGDTKKANPKAKGAKPES) are disordered. The short motif at 632–636 (KMAKK) is the 'KMSKS' region element. Residue Lys635 coordinates ATP.

This sequence belongs to the class-I aminoacyl-tRNA synthetase family.

The protein localises to the cytoplasm. It is found in the cytosol. It carries out the reaction tRNA(Ile) + L-isoleucine + ATP = L-isoleucyl-tRNA(Ile) + AMP + diphosphate. This chain is Isoleucine--tRNA ligase, cytoplasmic, found in Arabidopsis thaliana (Mouse-ear cress).